Reading from the N-terminus, the 200-residue chain is Inducible T-cell costimulator (200 aa).

Residues 1 to 20 (MKPYFSCVFVFCFLIKLLTG) form the signal peptide. Over 21 to 145 (ELNDLANHRM…LCCQLKLWLP (125 aa)) the chain is Extracellular. The Ig-like V-type domain maps to 30–133 (MFSFHDGGVQ…LSGGYLLIYE (104 aa)). 2 disulfide bridges follow: Cys-42–Cys-109 and Cys-63–Cys-83. Residues Asn-89 and Asn-123 are each glycosylated (N-linked (GlcNAc...) asparagine). A helical membrane pass occupies residues 146–166 (VGCAAFVAALLFGCIFIVWFA). Topologically, residues 167 to 200 (KKKYRSSVHDPNSEYMFMAAVNTNKKSRLAGMTS) are cytoplasmic.

In terms of assembly, homodimer; disulfide-linked. Interacts with ICOSLG. Interacts with PIK3R1. Interacts with TBK1; this interaction is critical for the maturation of T follicular regulatory cells. Post-translationally, N-glycosylated. Strongly expressed in the spleen and lung. Lower expression seen in liver, kidney and testis.

The protein localises to the cell membrane. Its function is as follows. Stimulatory receptor expressed in activated or antigen-experienced T-cells that plays an important role in the immune response. Upon binding to its ligand ICOSL expressed on antigen presenting cells (APCs), delivers costimulatory signals that enhances all basic T-cell responses to a foreign antigen, namely proliferation, secretion of lymphokines including IL10, up-regulation of molecules that mediate cell-cell interaction, and effective help for antibody secretion by B-cells. Also acts as a costimulatory receptor critical for the differentiation of T follicular regulatory cells upon immune challenges such as viral infection. Mechanistically, potentiates TCR-induced calcium flux by augmenting PLCG1 activation and actin remodeling. In addition, activates PI3K signaling pathways independently of calcium flux. Essential both for efficient interaction between T and B-cells and for normal antibody responses to T-cell dependent antigens. Prevents the apoptosis of pre-activated T-cells. Plays a critical role in CD40-mediated class switching of immunoglobin isotypes. The chain is Inducible T-cell costimulator (Icos) from Rattus norvegicus (Rat).